The following is a 363-amino-acid chain: D-proline dehydrogenase (363 aa).

3–17 lines the FAD pocket; the sequence is VAIVGGGIIGLFTAY.

The protein belongs to the DadA oxidoreductase family. In terms of assembly, homotetramer. It depends on FAD as a cofactor.

The protein resides in the cell membrane. The catalysed reaction is D-proline + A = 1-pyrroline-2-carboxylate + AH2. Functionally, catalyzes the dehydrogenation of D-proline. Can also use other D-amino acids, but with lower efficiency. The polypeptide is D-proline dehydrogenase (dpdh) (Pyrobaculum islandicum (strain DSM 4184 / JCM 9189 / GEO3)).